The sequence spans 134 residues: DNA polymerase III subunit psi (134 aa).

It belongs to the DNA polymerase III psi/HolD chain family. DNA polymerase III contains a core (composed of alpha, epsilon and theta chains) that associates with a tau subunit. This core dimerizes to form the POLIII' complex. PolIII' associates with the gamma complex (composed of gamma, delta, delta', psi and chi chains) and with the beta chain to form the complete DNA polymerase III complex. Interacts directly with the chi subunit (holC).

It catalyses the reaction DNA(n) + a 2'-deoxyribonucleoside 5'-triphosphate = DNA(n+1) + diphosphate. Its function is as follows. Part of the beta sliding clamp loading complex, which hydrolyzes ATP to load the beta clamp onto primed DNA to form the DNA replication pre-initiation complex. DNA polymerase III is a complex, multichain enzyme responsible for most of the replicative synthesis in bacteria. This DNA polymerase also exhibits 3' to 5' exonuclease activity. This chain is DNA polymerase III subunit psi (holD), found in Haemophilus influenzae (strain ATCC 51907 / DSM 11121 / KW20 / Rd).